The sequence spans 372 residues: Protein RecA (372 aa).

66–73 (GPESSGKT) contacts ATP. Residues 328 to 359 (GVGVRPEEPTATESGPDAATAESAPAVPAPAT) form a disordered region. Low complexity predominate over residues 345–359 (AATAESAPAVPAPAT).

This sequence belongs to the RecA family.

The protein resides in the cytoplasm. Can catalyze the hydrolysis of ATP in the presence of single-stranded DNA, the ATP-dependent uptake of single-stranded DNA by duplex DNA, and the ATP-dependent hybridization of homologous single-stranded DNAs. It interacts with LexA causing its activation and leading to its autocatalytic cleavage. This Streptomyces ambofaciens protein is Protein RecA.